A 462-amino-acid polypeptide reads, in one-letter code: ESX-1 secretion system protein EccE1 (462 aa).

The next 2 helical transmembrane spans lie at 9–29 and 34–54; these read FSTG…IAFL and WWAG…TFYG.

The protein belongs to the EccE family. Part of the ESX-1 / type VII secretion system (T7SS), which is composed of cytosolic and membrane components. The ESX-1 membrane complex is composed of EccB1, EccCa1, EccCb1, EccD1 and EccE1.

It is found in the cell inner membrane. Its function is as follows. Part of the ESX-1 specialized secretion system, which delivers several virulence factors to host cells during infection, including the key virulence factors EsxA (ESAT-6) and EsxB (CFP-10). The sequence is that of ESX-1 secretion system protein EccE1 from Mycobacterium tuberculosis (strain CDC 1551 / Oshkosh).